The chain runs to 97 residues: Core protein A15 homolog (97 aa).

This sequence belongs to the chordopoxvirinae A15 family. Part of a complex composed of A30, G7, F10 kinase, A15, D2, D3, and J1.

It is found in the host cytoplasm. Its subcellular location is the virion. In terms of biological role, late protein which is a part of a large complex required for early virion morphogenesis. This complex participates in the formation of virosomes and the incorporation of virosomal contents into nascent immature virions. A15 is required for the stability and kinase activity of F10. This is Core protein A15 homolog from Vertebrata (FPV).